The chain runs to 957 residues: Calsyntenin-3 (957 aa).

Residues 1–19 (MTPLLFPLLLASLLPSSSC) form the signal peptide. Over 20–848 (NKANKHKPWI…SHRNSMVPSA (829 aa)) the chain is Extracellular. Cadherin domains are found at residues 29–145 (IEAE…APVF) and 146–246 (VERL…KPSW). Asparagine 299, asparagine 347, and asparagine 508 each carry an N-linked (GlcNAc...) asparagine glycan. A helical transmembrane segment spans residues 849–869 (ATLIIVVCVGFLVLMVVLGLV). At 870 to 957 (RIHSLHRRVS…RIIETPPHRY (88 aa)) the chain is on the cytoplasmic side. Positions 919–957 (CVAGAAGGQQDDEDSSDSEAADSPSSDERRIIETPPHRY) are disordered. The span at 928–938 (QDDEDSSDSEA) shows a compositional bias: acidic residues. Basic and acidic residues predominate over residues 944–957 (SDERRIIETPPHRY).

It belongs to the calsyntenin family. As to quaternary structure, interacts (via cadherin domains) with both alpha and beta isoforms of neurexins (NRXN1, NRXN2 and NRXN3). Directly interacts with APBA2. Forms a tripartite complex with APBA2 and APP. Interacts with low affinity with KLC1. Interacts with SLC23A2/SVCT2. In terms of processing, proteolytically processed under normal cellular conditions. A primary zeta-cleavage generates a large extracellular (soluble) N-terminal domain (sAlc) and a short C-terminal transmembrane fragment (CTF1). A secondary cleavage catalyzed by gamma-secretase within the transmembrane domain releases the beta-Alc-beta chain in the extracellular milieu and produces an intracellular fragment (AlcICD). This processing is strongly suppressed in the tripartite complex formed with APBA2 and APP, which seems to prevent the association with gamma-secretase.

The protein resides in the postsynaptic cell membrane. The protein localises to the endoplasmic reticulum membrane. It localises to the golgi apparatus membrane. It is found in the cell projection. Its subcellular location is the dendrite. Its function is as follows. Postsynaptic adhesion molecule that binds to presynaptic neurexins to mediate both excitatory and inhibitory synapse formation. Promotes synapse development by acting as a cell adhesion molecule at the postsynaptic membrane, which associates with both neurexin-alpha and neurexin-beta proteins at the presynaptic membrane. Regulates the balance between excitatory and inhibitory synapses by inhibiting formation of excitatory parallel-fiber synapses and promoting formation of inhibitory synapses in the same neuron. May also be involved in ascorbate (vitamin C) uptake via its interaction with SLC23A2/SVCT2. Complex formation with APBA2 and APP, stabilizes APP metabolism and enhances APBA2-mediated suppression of beta-APP40 secretion, due to the retardation of intracellular APP maturation. The chain is Calsyntenin-3 (CLSTN3) from Bos taurus (Bovine).